The primary structure comprises 131 residues: Large ribosomal subunit protein bL17 (131 aa).

This sequence belongs to the bacterial ribosomal protein bL17 family. Part of the 50S ribosomal subunit. Contacts protein L32.

This chain is Large ribosomal subunit protein bL17, found in Thermotoga neapolitana (strain ATCC 49049 / DSM 4359 / NBRC 107923 / NS-E).